Here is a 275-residue protein sequence, read N- to C-terminus: Elongation factor Ts (275 aa).

An involved in Mg(2+) ion dislocation from EF-Tu region spans residues 76 to 79 (TDFV).

This sequence belongs to the EF-Ts family.

Its subcellular location is the cytoplasm. In terms of biological role, associates with the EF-Tu.GDP complex and induces the exchange of GDP to GTP. It remains bound to the aminoacyl-tRNA.EF-Tu.GTP complex up to the GTP hydrolysis stage on the ribosome. This Rhodococcus erythropolis (strain PR4 / NBRC 100887) protein is Elongation factor Ts.